Here is a 457-residue protein sequence, read N- to C-terminus: Neuropeptide receptor npr-1 (457 aa).

Residues 1–22 (MEVENFTDCQVYWKVYPDPSQS) are Extracellular-facing. A helical transmembrane segment spans residues 23–43 (IYAIVPFLTVYLFLFFLGLFG). The Cytoplasmic portion of the chain corresponds to 44 to 62 (NVTLIYVTCSHKALLSVQN). A helical transmembrane segment spans residues 63-83 (IFILNLAASDCMMCILSLPIT). Residues 84–100 (PITNVYKNWYFGNLLCH) are Extracellular-facing. The cysteines at positions 99 and 178 are disulfide-linked. The chain crosses the membrane as a helical span at residues 101-121 (LIPCIQGISIFVCTFSLGAIA). At 122 to 140 (LDRYILVVRPHSTPLSQRG) the chain is on the cytoplasmic side. Residues 141 to 161 (AFLTTVLLWILSFVVTLPYAF) form a helical membrane-spanning segment. Topologically, residues 162–193 (NMQMIEYTEERICGYFCTEKWESAKSRRAYTM) are extracellular. Residues 194-214 (IVMLAQFVVPFAVMAFCYANI) form a helical membrane-spanning segment. Residues 215-279 (VSVLSKRAQT…LQNRRTTSIL (65 aa)) lie on the Cytoplasmic side of the membrane. The helical transmembrane segment at 280-300 (VTMVVWFGITWLPHNVISLII) threads the bilayer. Over 301–324 (EYDDTQSFFRLYGRDDYDISYLLN) the chain is Extracellular. Residues 325 to 345 (LFTHSIAMSNNVLNPVLYAWL) form a helical membrane-spanning segment. Topologically, residues 346-457 (NPSFRQLVIK…IEFSVNDTLV (112 aa)) are cytoplasmic.

This sequence belongs to the G-protein coupled receptor 1 family. Expressed in neurons, including neurons in the head, the ventral nerve cord, and the preanal ganglion.

The protein localises to the membrane. Its function is as follows. G-protein coupled receptor for FARP(FMRFamide related peptide) neuropeptides. Activated by FARP neuropeptides flp-18 and flp-21. Plays a role in modulating social and feeding behavior. Required to modulate locomotion quiescence during the sleep-like state called lethargus, which occurs during molting between larval and adult stages, in part by regulating touch sensitivity. The polypeptide is Neuropeptide receptor npr-1 (Caenorhabditis elegans).